We begin with the raw amino-acid sequence, 317 residues long: Glutaminase (317 aa).

Substrate contacts are provided by Ser67, Asn118, Glu162, Asn169, Tyr193, Tyr245, and Val263.

It belongs to the glutaminase family. As to quaternary structure, homotetramer.

It catalyses the reaction L-glutamine + H2O = L-glutamate + NH4(+). The polypeptide is Glutaminase (Brucella canis (strain ATCC 23365 / NCTC 10854 / RM-666)).